The following is a 186-amino-acid chain: Elongation factor P (186 aa).

The protein belongs to the elongation factor P family.

The protein localises to the cytoplasm. The protein operates within protein biosynthesis; polypeptide chain elongation. Functionally, involved in peptide bond synthesis. Stimulates efficient translation and peptide-bond synthesis on native or reconstituted 70S ribosomes in vitro. Probably functions indirectly by altering the affinity of the ribosome for aminoacyl-tRNA, thus increasing their reactivity as acceptors for peptidyl transferase. This chain is Elongation factor P, found in Cupriavidus pinatubonensis (strain JMP 134 / LMG 1197) (Cupriavidus necator (strain JMP 134)).